The chain runs to 267 residues: Tryptophan synthase alpha chain (267 aa).

Residues Glu49 and Asp60 each act as proton acceptor in the active site.

It belongs to the TrpA family. As to quaternary structure, tetramer of two alpha and two beta chains.

The enzyme catalyses (1S,2R)-1-C-(indol-3-yl)glycerol 3-phosphate + L-serine = D-glyceraldehyde 3-phosphate + L-tryptophan + H2O. The protein operates within amino-acid biosynthesis; L-tryptophan biosynthesis; L-tryptophan from chorismate: step 5/5. In terms of biological role, the alpha subunit is responsible for the aldol cleavage of indoleglycerol phosphate to indole and glyceraldehyde 3-phosphate. This chain is Tryptophan synthase alpha chain, found in Acaryochloris marina (strain MBIC 11017).